A 338-amino-acid polypeptide reads, in one-letter code: Solute carrier family 35 member B1 homolog (338 aa).

9 helical membrane passes run 9–29 (FVIYAVGIFVCYFLYGIVQEK), 53–73 (LALVWVQCLCNYVFAKVLLTI), 84–104 (GSYVACSLTYLLAMVSTNMAM), 111–131 (TAVVGKSAKPIPVMILGVLIG), 135–155 (YSWTRYACVLTIVLGVILFMY), 168–188 (TLLGEVLLFLSLSMDGLTGAV), 213–233 (LMLGVAMVFTGEAKEFMYFTI), 244–264 (LIAVCGVLGQFFIFLMVASFG), and 284–304 (VLLFGNVLIARQWLGAVLVFA). The Di-lysine motif signature appears at 334–338 (KKLNS).

This sequence belongs to the nucleotide-sugar transporter family. SLC35B subfamily.

It is found in the endoplasmic reticulum membrane. Probable sugar transporter. This Drosophila melanogaster (Fruit fly) protein is Solute carrier family 35 member B1 homolog (meigo).